The primary structure comprises 504 residues: Transcription factor NDT80 (504 aa).

Disordered stretches follow at residues 64–172, 283–310, and 477–504; these read MHFN…QHHM, NGFP…NQHA, and RGRS…TPPQ. Low complexity-rich tracts occupy residues 73–87, 103–145, 153–172, and 292–301; these read QQQQ…QQQQ, QGPT…ARQP, QQAQ…QHHM, and HPQNQPQNHP. Residues 160 to 488 constitute a DNA-binding region (NDT80); it reads QADAQSQAQQ…RSPSSYHKDR (329 aa).

Its subcellular location is the nucleus. Its function is as follows. Meiosis-specific transcription factor that binds to the middle sporulation element (MSE) of targeted genes corresponding to the consensus sequence 5'-ACACAAA-3'. Acts as an activator of CDR1 induction by antifungal drugs. Modulates azole sensitivity by controlling the expression of ergosterol biosynthesis genes. Required for hyphal growth in response to different filament-inducing cues and for the proper expression of genes characterizing the filamentous transcriptional program including noteworthy genes encoding cell wall components, such as HWP1, ECE1, RBT4, and ALS3. Is essential for the completion of cell separation through the direct transcriptional regulation of genes encoding the chitinase CHT3 and the cell wall glucosidase SUN41. Required for biofilm formation and plays a key role in microcolony formation under both flow and static conditions and to epithelial surfaces. Essential for virulence. The sequence is that of Transcription factor NDT80 from Candida albicans (strain SC5314 / ATCC MYA-2876) (Yeast).